Reading from the N-terminus, the 57-residue chain is NADH dehydrogenase [ubiquinone] 1 beta subcomplex subunit 1 (57 aa).

A helical transmembrane segment spans residues 10-26 (HWVHILVPAGFVFGCYL).

It belongs to the complex I NDUFB1 subunit family. Complex I is composed of 45 different subunits.

It is found in the mitochondrion inner membrane. In terms of biological role, accessory subunit of the mitochondrial membrane respiratory chain NADH dehydrogenase (Complex I) that is believed not to be involved in catalysis. Complex I functions in the transfer of electrons from NADH to the respiratory chain. The immediate electron acceptor for the enzyme is believed to be ubiquinone. The chain is NADH dehydrogenase [ubiquinone] 1 beta subcomplex subunit 1 (Ndufb1) from Mus musculus (Mouse).